The following is a 376-amino-acid chain: Growth/differentiation factor 8 (376 aa).

The first 24 residues, M1–L24, serve as a signal peptide directing secretion. A propeptide spanning residues N25 to R267 is cleaved from the precursor. N72 carries N-linked (GlcNAc...) asparagine glycosylation. 4 disulfides stabilise this stretch: C273–C283, C282–C341, C310–C373, and C314–C375.

This sequence belongs to the TGF-beta family. In terms of assembly, homodimer; disulfide-linked. Interacts with WFIKKN2, leading to inhibit its activity. Interacts with FSTL3. Synthesized as large precursor molecule that undergoes proteolytic cleavage to generate an N-terminal propeptide and a disulfide linked C-terminal dimer, which is the biologically active molecule. The circulating form consists of a latent complex of the C-terminal dimer and other proteins, including its propeptide, which maintain the C-terminal dimer in a latent, inactive state. Ligand activation requires additional cleavage of the prodomain by a tolloid-like metalloproteinase.

The protein localises to the secreted. Functionally, acts specifically as a negative regulator of skeletal muscle growth. The protein is Growth/differentiation factor 8 (Mstn) of Rattus norvegicus (Rat).